The sequence spans 448 residues: Elongation factor 1-alpha (448 aa).

Residues 5–230 form the tr-type G domain; the sequence is KIHISIVVIG…DQINEPKRPS (226 aa). Residues 14–21 form a G1 region; sequence GHVDSGKS. Residue 14–21 coordinates GTP; it reads GHVDSGKS. Position 55 is an N6,N6-dimethyllysine (K55). Residues 70-74 form a G2 region; that stretch reads GITID. Residue K79 is modified to N6,N6,N6-trimethyllysine. Residues 91–94 form a G3 region; the sequence is DAPG. Residues 91–95 and 153–156 contribute to the GTP site; these read DAPGH and NKMD. The interval 153 to 156 is G4; the sequence is NKMD. N6,N6,N6-trimethyllysine is present on K187. The tract at residues 194-196 is G5; it reads SGF. Position 261 is an N6-methyllysine (K261). E289 is modified (5-glutamyl glycerylphosphorylethanolamine). The residue at position 306 (K306) is an N6,N6,N6-trimethyllysine. Residue E362 is modified to 5-glutamyl glycerylphosphorylethanolamine. K396 carries the N6,N6,N6-trimethyllysine modification.

This sequence belongs to the TRAFAC class translation factor GTPase superfamily. Classic translation factor GTPase family. EF-Tu/EF-1A subfamily.

It is found in the cytoplasm. In terms of biological role, this protein promotes the GTP-dependent binding of aminoacyl-tRNA to the A-site of ribosomes during protein biosynthesis. The sequence is that of Elongation factor 1-alpha from Solanum lycopersicum (Tomato).